Reading from the N-terminus, the 87-residue chain is UPF0250 protein CKO_02527 (87 aa).

The protein belongs to the UPF0250 family.

In Citrobacter koseri (strain ATCC BAA-895 / CDC 4225-83 / SGSC4696), this protein is UPF0250 protein CKO_02527.